Consider the following 336-residue polypeptide: Lipoyl synthase (336 aa).

[4Fe-4S] cluster contacts are provided by cysteine 81, cysteine 86, cysteine 92, cysteine 107, cysteine 111, cysteine 114, and serine 323. The region spanning 93–312 (FGHGTATFMI…EDYGYELGFS (220 aa)) is the Radical SAM core domain.

Belongs to the radical SAM superfamily. Lipoyl synthase family. [4Fe-4S] cluster serves as cofactor.

It localises to the cytoplasm. It carries out the reaction [[Fe-S] cluster scaffold protein carrying a second [4Fe-4S](2+) cluster] + N(6)-octanoyl-L-lysyl-[protein] + 2 oxidized [2Fe-2S]-[ferredoxin] + 2 S-adenosyl-L-methionine + 4 H(+) = [[Fe-S] cluster scaffold protein] + N(6)-[(R)-dihydrolipoyl]-L-lysyl-[protein] + 4 Fe(3+) + 2 hydrogen sulfide + 2 5'-deoxyadenosine + 2 L-methionine + 2 reduced [2Fe-2S]-[ferredoxin]. Its pathway is protein modification; protein lipoylation via endogenous pathway; protein N(6)-(lipoyl)lysine from octanoyl-[acyl-carrier-protein]: step 2/2. Catalyzes the radical-mediated insertion of two sulfur atoms into the C-6 and C-8 positions of the octanoyl moiety bound to the lipoyl domains of lipoate-dependent enzymes, thereby converting the octanoylated domains into lipoylated derivatives. The protein is Lipoyl synthase of Stenotrophomonas maltophilia (strain K279a).